The sequence spans 261 residues: Phosphatidylglycerol--prolipoprotein diacylglyceryl transferase (261 aa).

7 helical membrane passes run 19-39 (VHWY…LALY), 56-76 (LIFY…MLFY), 92-112 (WRGG…TWIF), 126-146 (FVVP…FING), 173-193 (QLYE…WFSA), 199-219 (FAVS…AEFF), and 227-247 (GFVA…MIII). Arginine 139 is a binding site for a 1,2-diacyl-sn-glycero-3-phospho-(1'-sn-glycerol).

The protein belongs to the Lgt family.

Its subcellular location is the cell inner membrane. It carries out the reaction L-cysteinyl-[prolipoprotein] + a 1,2-diacyl-sn-glycero-3-phospho-(1'-sn-glycerol) = an S-1,2-diacyl-sn-glyceryl-L-cysteinyl-[prolipoprotein] + sn-glycerol 1-phosphate + H(+). It functions in the pathway protein modification; lipoprotein biosynthesis (diacylglyceryl transfer). Catalyzes the transfer of the diacylglyceryl group from phosphatidylglycerol to the sulfhydryl group of the N-terminal cysteine of a prolipoprotein, the first step in the formation of mature lipoproteins. This Coxiella burnetii (strain CbuK_Q154) (Coxiella burnetii (strain Q154)) protein is Phosphatidylglycerol--prolipoprotein diacylglyceryl transferase.